The sequence spans 82 residues: Small ribosomal subunit protein bS16 (82 aa).

This sequence belongs to the bacterial ribosomal protein bS16 family.

The polypeptide is Small ribosomal subunit protein bS16 (Pasteurella multocida (strain Pm70)).